The sequence spans 198 residues: Inositol diphosphatase DSP4 (198 aa).

The tract at residues 1–23 is disordered; it reads MTLESYAGDVHTVPQSENSMEER. The 155-residue stretch at 34-188 folds into the Tyrosine-protein phosphatase domain; it reads NFAMVDNGIF…LKHTPLSFSC (155 aa). The tract at residues 90-102 is WPD loop important for active site topology; it reads FGIERCKEPFVNI. The 1D-myo-inositol hexakisphosphate site is built by asparagine 101 and isoleucine 102. Cysteine 126 functions as the Phosphocysteine intermediate in the catalytic mechanism.

Belongs to the protein-tyrosine phosphatase family. Atypical dual-specificity phosphatase Siw14-like subfamily. Highly expressed in flowers and at lower levels in roots, leaves, stems and siliques.

The enzyme catalyses 5-diphospho-1D-myo-inositol 1,2,3,4,6-pentakisphosphate + H2O = 1D-myo-inositol hexakisphosphate + phosphate + H(+). It catalyses the reaction 1,5-bis(diphospho)-1D-myo-inositol 2,3,4,6-tetrakisphosphate + H2O = 1-diphospho-1D-myo-inositol 2,3,4,5,6-pentakisphosphate + phosphate + 2 H(+). It carries out the reaction 3,5-bis(diphospho)-1D-myo-inositol 1,2,4,6-tetrakisphosphate + H2O = 3-diphospho-1D-myo-inositol 1,2,4,5,6-pentakisphosphate + phosphate + 2 H(+). The catalysed reaction is 6-diphospho-1D-myo-inositol pentakisphosphate + H2O = 1D-myo-inositol hexakisphosphate + phosphate + H(+). Its function is as follows. Cleaves the beta-phosphate at the 5-position of soluble inositol pyrophosphates. Has highest activity on 5-diphosphoinositol 1,2,3,4,6-pentakisphosphate (5-InsP(7)), 1,5-bis-diphosphoinositol 2,3,4,6-tetrakisphosphate (1,5-InsP(8)) and 3,5-InsP(8). Acts as a negative regulator of defense responses against the bacterial pathogen Pseudomonas syringae pv tomato strain DC3000. The chain is Inositol diphosphatase DSP4 from Arabidopsis thaliana (Mouse-ear cress).